The chain runs to 226 residues: MRRDDAAPVGWAVSTQPVPYPAAVAAMEARAAAIADGTAGELIWLLEHPPLYTAGVSAKAGDLIQPDRFPVFESGRGGQFTYHGPGQRVAYVMLDLTQRGRDVRAFVAALEAWIIDALAAFNVTGELREGRVGVWVERKGAGWSREDKIAAIGVKLRRWVSFHGISLNVEPDLSHFSGIVPCGQTEHGVTSLVDLGLPVTLDDADAALRASFSKVFGPVEDAEAPV.

In terms of domain architecture, BPL/LPL catalytic spans 37-220; it reads GTAGELIWLL…SFSKVFGPVE (184 aa). Residues 76–83, 151–153, and 164–166 contribute to the substrate site; these read RGGQFTYH, AIG, and GIS. Cys-182 serves as the catalytic Acyl-thioester intermediate.

It belongs to the LipB family.

It is found in the cytoplasm. The enzyme catalyses octanoyl-[ACP] + L-lysyl-[protein] = N(6)-octanoyl-L-lysyl-[protein] + holo-[ACP] + H(+). It participates in protein modification; protein lipoylation via endogenous pathway; protein N(6)-(lipoyl)lysine from octanoyl-[acyl-carrier-protein]: step 1/2. Functionally, catalyzes the transfer of endogenously produced octanoic acid from octanoyl-acyl-carrier-protein onto the lipoyl domains of lipoate-dependent enzymes. Lipoyl-ACP can also act as a substrate although octanoyl-ACP is likely to be the physiological substrate. This chain is Octanoyltransferase, found in Caulobacter vibrioides (strain ATCC 19089 / CIP 103742 / CB 15) (Caulobacter crescentus).